The primary structure comprises 79 residues: Acyl carrier protein (79 aa).

The Carrier domain occupies 2-77; the sequence is STIEERVKKI…QAIDYVKAHV (76 aa). O-(pantetheine 4'-phosphoryl)serine is present on Ser37.

It belongs to the acyl carrier protein (ACP) family. Post-translationally, 4'-phosphopantetheine is transferred from CoA to a specific serine of apo-ACP by AcpS. This modification is essential for activity because fatty acids are bound in thioester linkage to the sulfhydryl of the prosthetic group.

The protein localises to the cytoplasm. The protein operates within lipid metabolism; fatty acid biosynthesis. In terms of biological role, carrier of the growing fatty acid chain in fatty acid biosynthesis. In Xanthomonas axonopodis pv. citri (strain 306), this protein is Acyl carrier protein.